A 172-amino-acid polypeptide reads, in one-letter code: Gamma-crystallin-4 (172 aa).

2 Beta/gamma crystallin 'Greek key' domains span residues 1–37 (IFFY…RVES) and 38–80 (GNWI…RFIP). The segment at 81–85 (HPHSQ) is connecting peptide. Beta/gamma crystallin 'Greek key' domains are found at residues 86 to 126 (YKMR…NVSD) and 127 to 169 (GHWM…RRVH).

It belongs to the beta/gamma-crystallin family. As to quaternary structure, monomer.

Functionally, crystallins are the dominant structural components of the vertebrate eye lens. The protein is Gamma-crystallin-4 (cryg4) of Xenopus laevis (African clawed frog).